A 242-amino-acid chain; its full sequence is Probable transcriptional regulatory protein Bphy_2064 (242 aa).

The protein belongs to the TACO1 family.

It localises to the cytoplasm. The sequence is that of Probable transcriptional regulatory protein Bphy_2064 from Paraburkholderia phymatum (strain DSM 17167 / CIP 108236 / LMG 21445 / STM815) (Burkholderia phymatum).